The primary structure comprises 523 residues: Putative oxidoreductase TDA3 (523 aa).

The segment covering 157–172 has biased composition (low complexity); that stretch reads NSSLSSSGSSLKNDSA. The tract at residues 157–189 is disordered; it reads NSSLSSSGSSLKNDSASNEEEGSDIHVSSSVPS. A phosphoserine mark is found at serine 189, serine 204, and serine 306.

This sequence belongs to the TDA3 family. Interacts with BTN2.

It localises to the cytoplasm. The protein localises to the late endosome. Its function is as follows. Putative oxidoreductase that negatively regulates the retrieval of cargo from late endosomes to the Golgi. Regulates YIF1 and KEX2 localization. Required for fast DNA replication. This chain is Putative oxidoreductase TDA3 (TDA3), found in Saccharomyces cerevisiae (strain ATCC 204508 / S288c) (Baker's yeast).